The primary structure comprises 250 residues: UDP-2,3-diacylglucosamine hydrolase (250 aa).

Aspartate 8, histidine 10, aspartate 41, asparagine 79, and histidine 114 together coordinate Mn(2+). Substrate is bound at residue asparagine 79 to arginine 80. Substrate contacts are provided by aspartate 122, serine 160, aspartate 172, glutamine 175, and histidine 203. Mn(2+)-binding residues include histidine 203 and histidine 205.

This sequence belongs to the LpxH family. Mn(2+) serves as cofactor.

The protein resides in the cell inner membrane. It carries out the reaction UDP-2-N,3-O-bis[(3R)-3-hydroxytetradecanoyl]-alpha-D-glucosamine + H2O = 2-N,3-O-bis[(3R)-3-hydroxytetradecanoyl]-alpha-D-glucosaminyl 1-phosphate + UMP + 2 H(+). Its pathway is glycolipid biosynthesis; lipid IV(A) biosynthesis; lipid IV(A) from (3R)-3-hydroxytetradecanoyl-[acyl-carrier-protein] and UDP-N-acetyl-alpha-D-glucosamine: step 4/6. Hydrolyzes the pyrophosphate bond of UDP-2,3-diacylglucosamine to yield 2,3-diacylglucosamine 1-phosphate (lipid X) and UMP by catalyzing the attack of water at the alpha-P atom. Involved in the biosynthesis of lipid A, a phosphorylated glycolipid that anchors the lipopolysaccharide to the outer membrane of the cell. The protein is UDP-2,3-diacylglucosamine hydrolase of Xylella fastidiosa (strain M12).